A 503-amino-acid polypeptide reads, in one-letter code: MHLDLIHKSFILVWLIYIRAALADQFTYKACYSASDIRKLGLTYKGVYEYQSVSYCQNECPGQAVVALFNGTGCYCGGSVAQLQSLTQVDSSKCDVSCAGWPYQNCGGSSAMNVYINNAASTADSTSSTATSTSTTSSSSTSVSSKTSTKLDTKTSTSSSATHSSSSSSTTSTTTSSSETTTSSSSSSSSSSTSTTSTTSTTSSTTSTSSSPSTTSSSTSASSSSETSSTQATSSSTTSTSSSTSTATVTSTPSSTSIGTSTHYTTRVVTQSVVSQANQQASTIFTTRTSVYATVSSTSSSTSSLLNGKSSSSKSKGLSGGAIAGVVVGVVCGTVALLALALFFFVWKKRRQSSQHVDLEETKQYQPYSLGDADANPVIPPSASSTNWHIPSRNNTALSKNTASTFATYDLPTRAPGGRDSIITGDAHNISKRSHFPSVVYEEPPSIYNGNQRFSATSLPDMMEERQLHIVNPDNVSSNIGSNVSDGDDDYDDAKDSNNSSLR.

An N-terminal signal peptide occupies residues 1–23 (MHLDLIHKSFILVWLIYIRAALA). At 24-325 (DQFTYKACYS…KGLSGGAIAG (302 aa)) the chain is on the extracellular side. A WSC domain is found at 25-118 (QFTYKACYSA…SSAMNVYINN (94 aa)). The interval 124-260 (DSTSSTATST…STPSSTSIGT (137 aa)) is disordered. Residues 326–346 (VVVGVVCGTVALLALALFFFV) form a helical membrane-spanning segment. The Cytoplasmic portion of the chain corresponds to 347–503 (WKKRRQSSQH…AKDSNNSSLR (157 aa)). T402 bears the Phosphothreonine mark. Phosphoserine is present on residues S455 and S458. The disordered stretch occupies residues 470–503 (IVNPDNVSSNIGSNVSDGDDDYDDAKDSNNSSLR).

In terms of processing, N-glycosylated.

Its subcellular location is the cell membrane. The sequence is that of Cell wall integrity and stress response component 2 (WSC2) from Saccharomyces cerevisiae (strain ATCC 204508 / S288c) (Baker's yeast).